The chain runs to 699 residues: Elongation factor G (699 aa).

One can recognise a tr-type G domain in the interval 8-283; that stretch reads EHIRNIGICA…AVVDFLPSPI (276 aa). GTP-binding positions include 17–24, 81–85, and 135–138; these read AHIDAGKT, DTPGH, and NKMD.

Belongs to the TRAFAC class translation factor GTPase superfamily. Classic translation factor GTPase family. EF-G/EF-2 subfamily.

Its subcellular location is the cytoplasm. Its function is as follows. Catalyzes the GTP-dependent ribosomal translocation step during translation elongation. During this step, the ribosome changes from the pre-translocational (PRE) to the post-translocational (POST) state as the newly formed A-site-bound peptidyl-tRNA and P-site-bound deacylated tRNA move to the P and E sites, respectively. Catalyzes the coordinated movement of the two tRNA molecules, the mRNA and conformational changes in the ribosome. The protein is Elongation factor G of Rickettsia conorii (strain ATCC VR-613 / Malish 7).